The chain runs to 284 residues: Diaminopimelate epimerase (284 aa).

Substrate is bound by residues Asn14 and Asn67. Cys76 (proton donor) is an active-site residue. Residues Gly77–Asn78, Asn166, Asn199, and Glu217–Arg218 each bind substrate. Cys226 (proton acceptor) is an active-site residue. Substrate is bound at residue Gly227 to Thr228.

Belongs to the diaminopimelate epimerase family. Homodimer.

Its subcellular location is the cytoplasm. The catalysed reaction is (2S,6S)-2,6-diaminopimelate = meso-2,6-diaminopimelate. The protein operates within amino-acid biosynthesis; L-lysine biosynthesis via DAP pathway; DL-2,6-diaminopimelate from LL-2,6-diaminopimelate: step 1/1. Catalyzes the stereoinversion of LL-2,6-diaminopimelate (L,L-DAP) to meso-diaminopimelate (meso-DAP), a precursor of L-lysine and an essential component of the bacterial peptidoglycan. The sequence is that of Diaminopimelate epimerase from Bacillus velezensis (strain DSM 23117 / BGSC 10A6 / LMG 26770 / FZB42) (Bacillus amyloliquefaciens subsp. plantarum).